The primary structure comprises 196 residues: ATP-dependent Clp protease proteolytic subunit (196 aa).

Serine 101 (nucleophile) is an active-site residue. Residue histidine 126 is part of the active site.

Belongs to the peptidase S14 family. Component of the chloroplastic Clp protease core complex.

It is found in the plastid. The protein resides in the chloroplast stroma. The enzyme catalyses Hydrolysis of proteins to small peptides in the presence of ATP and magnesium. alpha-casein is the usual test substrate. In the absence of ATP, only oligopeptides shorter than five residues are hydrolyzed (such as succinyl-Leu-Tyr-|-NHMec, and Leu-Tyr-Leu-|-Tyr-Trp, in which cleavage of the -Tyr-|-Leu- and -Tyr-|-Trp bonds also occurs).. In terms of biological role, cleaves peptides in various proteins in a process that requires ATP hydrolysis. Has a chymotrypsin-like activity. Plays a major role in the degradation of misfolded proteins. This is ATP-dependent Clp protease proteolytic subunit from Panax ginseng (Korean ginseng).